We begin with the raw amino-acid sequence, 270 residues long: MPELPEVETTVRGLATVLDGQVIRRVAVNRADLRRPFPEDLAQALTGARVTGMGRRAKYGLIHTDRERTMVFHLGMSGRWRIDPEDIGKHDHLVLETGEGRVLSLNDARRFGSVDLVDTGRLEEWPPFAALGPEPLGPGLKARHLAKAFEGRIAAVKLLLLDQQIVAGLGNIYVCEALYRARIHPEREGGKVSARALGLLVPAIRAVLEESIAAGGSTLRDYARPDGELGYFAKDWRVYGREGEPCQCGGVVKRIVQGGRSTFFCPRCQK.

P2 (schiff-base intermediate with DNA) is an active-site residue. Catalysis depends on E3, which acts as the Proton donor. The active-site Proton donor; for beta-elimination activity is K58. DNA-binding residues include H90, R109, and R152. The FPG-type zinc-finger motif lies at 237-270 (RVYGREGEPCQCGGVVKRIVQGGRSTFFCPRCQK). Catalysis depends on R260, which acts as the Proton donor; for delta-elimination activity.

This sequence belongs to the FPG family. In terms of assembly, monomer. The cofactor is Zn(2+).

The enzyme catalyses Hydrolysis of DNA containing ring-opened 7-methylguanine residues, releasing 2,6-diamino-4-hydroxy-5-(N-methyl)formamidopyrimidine.. It carries out the reaction 2'-deoxyribonucleotide-(2'-deoxyribose 5'-phosphate)-2'-deoxyribonucleotide-DNA = a 3'-end 2'-deoxyribonucleotide-(2,3-dehydro-2,3-deoxyribose 5'-phosphate)-DNA + a 5'-end 5'-phospho-2'-deoxyribonucleoside-DNA + H(+). In terms of biological role, involved in base excision repair of DNA damaged by oxidation or by mutagenic agents. Acts as a DNA glycosylase that recognizes and removes damaged bases. Has a preference for oxidized purines, such as 7,8-dihydro-8-oxoguanine (8-oxoG). Has AP (apurinic/apyrimidinic) lyase activity and introduces nicks in the DNA strand. Cleaves the DNA backbone by beta-delta elimination to generate a single-strand break at the site of the removed base with both 3'- and 5'-phosphates. The sequence is that of Formamidopyrimidine-DNA glycosylase from Novosphingobium aromaticivorans (strain ATCC 700278 / DSM 12444 / CCUG 56034 / CIP 105152 / NBRC 16084 / F199).